Here is a 312-residue protein sequence, read N- to C-terminus: Tetraacyldisaccharide 4'-kinase (312 aa).

60-67 (IAGGSGKT) serves as a coordination point for ATP.

This sequence belongs to the LpxK family.

The enzyme catalyses a lipid A disaccharide + ATP = a lipid IVA + ADP + H(+). It functions in the pathway glycolipid biosynthesis; lipid IV(A) biosynthesis; lipid IV(A) from (3R)-3-hydroxytetradecanoyl-[acyl-carrier-protein] and UDP-N-acetyl-alpha-D-glucosamine: step 6/6. Functionally, transfers the gamma-phosphate of ATP to the 4'-position of a tetraacyldisaccharide 1-phosphate intermediate (termed DS-1-P) to form tetraacyldisaccharide 1,4'-bis-phosphate (lipid IVA). In Helicobacter pylori (strain ATCC 700392 / 26695) (Campylobacter pylori), this protein is Tetraacyldisaccharide 4'-kinase.